Here is a 299-residue protein sequence, read N- to C-terminus: Ribosomal RNA small subunit methyltransferase H (299 aa).

Residues 36–38 (GGH), Asp55, Asp103, and Gln110 each bind S-adenosyl-L-methionine. Basic and acidic residues-rich tracts occupy residues 268–282 (KPVR…ENPR) and 289–299 (RAAERIEKGGD). The tract at residues 268–299 (KPVRPSEEEIRENPRARSGRLRAAERIEKGGD) is disordered.

The protein belongs to the methyltransferase superfamily. RsmH family.

The protein resides in the cytoplasm. The catalysed reaction is cytidine(1402) in 16S rRNA + S-adenosyl-L-methionine = N(4)-methylcytidine(1402) in 16S rRNA + S-adenosyl-L-homocysteine + H(+). Specifically methylates the N4 position of cytidine in position 1402 (C1402) of 16S rRNA. The polypeptide is Ribosomal RNA small subunit methyltransferase H (Thermotoga petrophila (strain ATCC BAA-488 / DSM 13995 / JCM 10881 / RKU-1)).